Consider the following 203-residue polypeptide: MMPTIASIALVLLAYLSGSIPFSLLVARAWGVDLRVSGSGNVGAANVWRTCGFSAFALAMGGDMLKGALPTIAAQALGLSPLAVVIVGTAAMLGHTRSIFLGFRGGKAVATGGGVVLTLAPLVALPGLAAWAVTFGITRISAVASLTAAAVCGIAAAVLLALGMLPPAYAIFVWGAVAAIVFLHRSNIHRLRTGTENRFEKLF.

6 helical membrane-spanning segments follow: residues 5–25 (IASIALVLLAYLSGSIPFSLL), 50–70 (TCGFSAFALAMGGDMLKGALP), 72–92 (IAAQALGLSPLAVVIVGTAAM), 115–135 (VVLTLAPLVALPGLAAWAVTF), 140–160 (ISAVASLTAAAVCGIAAAVLL), and 162–182 (LGMLPPAYAIFVWGAVAAIVF).

Belongs to the PlsY family. Probably interacts with PlsX.

It is found in the cell membrane. The enzyme catalyses an acyl phosphate + sn-glycerol 3-phosphate = a 1-acyl-sn-glycero-3-phosphate + phosphate. Its pathway is lipid metabolism; phospholipid metabolism. Functionally, catalyzes the transfer of an acyl group from acyl-phosphate (acyl-PO(4)) to glycerol-3-phosphate (G3P) to form lysophosphatidic acid (LPA). This enzyme utilizes acyl-phosphate as fatty acyl donor, but not acyl-CoA or acyl-ACP. This chain is Glycerol-3-phosphate acyltransferase, found in Roseiflexus sp. (strain RS-1).